Here is a 291-residue protein sequence, read N- to C-terminus: Undecaprenyl-diphosphatase (291 aa).

Transmembrane regions (helical) follow at residues 1–21 (MFII…LTEF), 48–68 (SAFT…AWVF), 102–122 (LHVL…DDFI), 126–146 (LFSV…MIIA), 162–182 (ISYF…WPGF), 203–223 (SDFT…LSLL), 231–251 (IADI…GLIA), and 267–287 (FAIY…GFGI).

This sequence belongs to the UppP family.

It is found in the cell membrane. It catalyses the reaction di-trans,octa-cis-undecaprenyl diphosphate + H2O = di-trans,octa-cis-undecaprenyl phosphate + phosphate + H(+). Its function is as follows. Catalyzes the dephosphorylation of undecaprenyl diphosphate (UPP). Confers resistance to bacitracin. This chain is Undecaprenyl-diphosphatase, found in Staphylococcus aureus (strain MRSA252).